Consider the following 808-residue polypeptide: Leucine--tRNA ligase (808 aa).

The 'HIGH' region signature appears at 40–51; sequence PYPSGQGLHVGH. Residues 580–584 carry the 'KMSKS' region motif; sequence KMSKS. Residue Lys583 coordinates ATP.

Belongs to the class-I aminoacyl-tRNA synthetase family.

Its subcellular location is the cytoplasm. The enzyme catalyses tRNA(Leu) + L-leucine + ATP = L-leucyl-tRNA(Leu) + AMP + diphosphate. In Leuconostoc mesenteroides subsp. mesenteroides (strain ATCC 8293 / DSM 20343 / BCRC 11652 / CCM 1803 / JCM 6124 / NCDO 523 / NBRC 100496 / NCIMB 8023 / NCTC 12954 / NRRL B-1118 / 37Y), this protein is Leucine--tRNA ligase.